The sequence spans 386 residues: Centrosomal protein of 44 kDa (386 aa).

The binds with microtubules and centrioles stretch occupies residues 11 to 194; sequence RKLEQVLRSL…GVPEGTVTST (184 aa). Residues 232–262 adopt a coiled-coil conformation; that stretch reads ELTALQIALAECQEKLKKLTWIEKRLECLEA. Ser-329 carries the phosphoserine modification. Residues 359–382 are a coiled coil; the sequence is SEETTMQKMERMKKMFEETAELLK.

As to quaternary structure, interacts with CROCC. Interacts with POC1B; the interaction is direct and recruits POC1B to centriolar microtubules. Binds to centriolar microtubules.

It localises to the cytoplasm. Its subcellular location is the cytoskeleton. It is found in the microtubule organizing center. The protein localises to the centrosome. The protein resides in the centriole. It localises to the spindle pole. Its subcellular location is the midbody. Functionally, centriole-enriched microtubule-binding protein involved in centriole biogenesis. In collaboration with CEP295 and POC1B, is required for the centriole-to-centrosome conversion by ensuring the formation of bona fide centriole wall. Functions as a linker component that maintains centrosome cohesion. Associates with CROCC and regulates its stability and localization to the centrosome. The sequence is that of Centrosomal protein of 44 kDa (Cep44) from Rattus norvegicus (Rat).